The primary structure comprises 1297 residues: MFQIFRGSPALSEFRLNQLSARFQKADLPVKSCYAEYLHFADLSAGLSAEETDELEQLLHYGPTLAQHESKGECFVVIPRVGTISSWSSKATDIAHNCGLDKVVRLERGIAYYFEFERTLSAEQQQRLVSHIHDRMMETVVRAPEQAAVLFDSQDPKPFTTVDILNGGRKALEIANVELGLALASDEMDYLVENFTALGRNPNDIELYMFAQANSEHCRHKIFNADWVIDGEKQEKSLFKMIKNTFEKTPDHVLSAYKDNAAVMEGSKVGRFFADQDGQYRYHNEDAHILMKVETHNHPTAISPFPGAATGSGGEIRDEGATGRGAKPKAGLVGFSVSNLVIPGFEQPWENELSKPSRISSALDIMIEGPLGGAAFNNEFGRPALLGYFRTYEEKVNSFAGEEVRGYHKPIMLAGGIGNIRAEHVQKGEIPVGAKLIVLGGPAMNIGLGGGAASSMTSGKSKEDLDFASVQRDNPEMERRCQEVIDRCWQMGEGNPIAFIHDVGAGGLSNAMPELVHDGGRGGKFELRNILCDERGMSPLEIWCNESQERYVLAVAPENLAVFEELCQRERAPYAIIGEATEEEHLTLHDNHFDNNPIDLPMSLLLGKTPKMTRDVKSTQVNNSPVDQTNIELKEAFHRVLRLPVVAEKTFLITIGDRTVTGMVARDQMVGPWQIPVSDVAVTTAALDTYHGEAMSIGERAPVALLDFAASARLAVAESITNIAATNIGDIKRIKLSANWMSAAGHEGEDAGLYEAVKAVGEELCPALGLTVPVGKDSMSMKTTWSENGEQKTVTAPLSLVISAFARVEDVRKTVTPQLRTDKGETALLLIDLGEGKNRLGATALAQVYKQLGDKPADVVNVELLKGFYNAMQTLVQQGKLLAYHDRSDGGLIVTLAEMAFAGNCGIRAEISALGDNDLGILFSEELGAVIQVRESDLAAVREVLTQHGLIHLTKDLGLVTEYDEFEIKRGTKVVLSEKRSELRGIWAELTHQMQRLRDNPECADQEFAAKKDPANQGFSAHLTYDINEDVAAPYIATGKKPRIAVLREQGVNSHVEMGAAFDRAGFEAIDVHMSDLHTARQNLKDFNALVACGGFSYGDVLGAGGGWAKSVLFNTALRDQFQAFFEREDTLALGVCNGCQMISTLADIIPGTENWPRFVRNTSERFEARAALVRINESNSVWFQGMAGSHMPIAVSHGEGRVEFKNDSQLQGLRDQGLIIAQYVDNNIRPTEVYPANPNGSVDGITALSNTNGRVAIMMPHPERVFRTVSNSWHPEDWSEDGAWMRLFRNARVFFK.

Positions 305–324 are disordered; it reads FPGAATGSGGEIRDEGATGR. 307–318 is an ATP binding site; sequence GAATGSGGEIRD. Mg(2+) contacts are provided by Asp679, Glu718, Asn722, and Asp886. Ser888 lines the ATP pocket. In terms of domain architecture, Glutamine amidotransferase type-1 spans 1044-1297; the sequence is IAVLREQGVN…LFRNARVFFK (254 aa). The active-site Nucleophile is the Cys1137. Catalysis depends on residues His1262 and Glu1264.

This sequence in the N-terminal section; belongs to the FGAMS family. As to quaternary structure, monomer.

It localises to the cytoplasm. It carries out the reaction N(2)-formyl-N(1)-(5-phospho-beta-D-ribosyl)glycinamide + L-glutamine + ATP + H2O = 2-formamido-N(1)-(5-O-phospho-beta-D-ribosyl)acetamidine + L-glutamate + ADP + phosphate + H(+). It functions in the pathway purine metabolism; IMP biosynthesis via de novo pathway; 5-amino-1-(5-phospho-D-ribosyl)imidazole from N(2)-formyl-N(1)-(5-phospho-D-ribosyl)glycinamide: step 1/2. In terms of biological role, phosphoribosylformylglycinamidine synthase involved in the purines biosynthetic pathway. Catalyzes the ATP-dependent conversion of formylglycinamide ribonucleotide (FGAR) and glutamine to yield formylglycinamidine ribonucleotide (FGAM) and glutamate. This is Phosphoribosylformylglycinamidine synthase from Mannheimia succiniciproducens (strain KCTC 0769BP / MBEL55E).